A 449-amino-acid polypeptide reads, in one-letter code: N-succinylarginine dihydrolase (449 aa).

Substrate-binding positions include 19-28 (GGLSYGNVAS), N110, and 137-138 (HR). Residues 23 to 43 (YGNVASQSNSQQGSNPREAAR) form a disordered region. The span at 25–37 (NVASQSNSQQGSN) shows a compositional bias: polar residues. Residue E174 is part of the active site. R214 is a substrate binding site. H250 is a catalytic residue. 2 residues coordinate substrate: D252 and N365. C371 serves as the catalytic Nucleophile.

The protein belongs to the succinylarginine dihydrolase family. In terms of assembly, homodimer.

It catalyses the reaction N(2)-succinyl-L-arginine + 2 H2O + 2 H(+) = N(2)-succinyl-L-ornithine + 2 NH4(+) + CO2. Its pathway is amino-acid degradation; L-arginine degradation via AST pathway; L-glutamate and succinate from L-arginine: step 2/5. Catalyzes the hydrolysis of N(2)-succinylarginine into N(2)-succinylornithine, ammonia and CO(2). The protein is N-succinylarginine dihydrolase of Pseudomonas entomophila (strain L48).